The chain runs to 223 residues: Large ribosomal subunit protein uL3 (223 aa).

Belongs to the universal ribosomal protein uL3 family. Part of the 50S ribosomal subunit. Forms a cluster with proteins L14 and L19.

In terms of biological role, one of the primary rRNA binding proteins, it binds directly near the 3'-end of the 23S rRNA, where it nucleates assembly of the 50S subunit. The protein is Large ribosomal subunit protein uL3 of Cutibacterium acnes (strain DSM 16379 / KPA171202) (Propionibacterium acnes).